Consider the following 252-residue polypeptide: Probable transcriptional regulatory protein Cagg_2594 (252 aa).

Positions 1-14 (MSGHSKWHTIRRAK) are enriched in basic residues. A disordered region spans residues 1–22 (MSGHSKWHTIRRAKSANDQRRG).

Belongs to the TACO1 family.

It is found in the cytoplasm. The sequence is that of Probable transcriptional regulatory protein Cagg_2594 from Chloroflexus aggregans (strain MD-66 / DSM 9485).